Here is a 221-residue protein sequence, read N- to C-terminus: MLAFEHHGVVPYEEAWARQRELHALRVADEIPDTCLLLEHPPVYTAGKRTEDFERPTDGTPVIAVDRGGRITWHGPGQLVGYPIVKLPMPIDAVGHVRRIEQALIAVCADLGVTAVRVPGRSGVWITSPGAPDRKIAAIGVRISRCTTMHGFALNCNPDLSWFRRIVPCGLPDAEVTSLSVELGRNVTVAEVRPLVVARLTEFLLPARPTDRVPTPQSAAN.

Positions 29 to 208 (DEIPDTCLLL…RLTEFLLPAR (180 aa)) constitute a BPL/LPL catalytic domain. Substrate is bound by residues 67-74 (RGGRITWH), 138-140 (AIG), and 151-153 (GFA). Catalysis depends on C169, which acts as the Acyl-thioester intermediate.

It belongs to the LipB family.

It is found in the cytoplasm. The catalysed reaction is octanoyl-[ACP] + L-lysyl-[protein] = N(6)-octanoyl-L-lysyl-[protein] + holo-[ACP] + H(+). Its pathway is protein modification; protein lipoylation via endogenous pathway; protein N(6)-(lipoyl)lysine from octanoyl-[acyl-carrier-protein]: step 1/2. In terms of biological role, catalyzes the transfer of endogenously produced octanoic acid from octanoyl-acyl-carrier-protein onto the lipoyl domains of lipoate-dependent enzymes. Lipoyl-ACP can also act as a substrate although octanoyl-ACP is likely to be the physiological substrate. The chain is Octanoyltransferase from Acidothermus cellulolyticus (strain ATCC 43068 / DSM 8971 / 11B).